Consider the following 161-residue polypeptide: Cytochrome b6-f complex subunit 4 (161 aa).

Transmembrane regions (helical) follow at residues 37-57 (LLYIFPVVIMGTIALVIGLAV), 96-116 (LLGVLMNASIPLGLMLIPFIE), and 130-150 (AMTVFLFGTLVTLWLGIGAAF).

Belongs to the cytochrome b family. PetD subfamily. In terms of assembly, the 4 large subunits of the cytochrome b6-f complex are cytochrome b6, subunit IV (17 kDa polypeptide, PetD), cytochrome f and the Rieske protein, while the 4 small subunits are PetG, PetL, PetM and PetN. The complex functions as a dimer.

It localises to the cellular thylakoid membrane. Functionally, component of the cytochrome b6-f complex, which mediates electron transfer between photosystem II (PSII) and photosystem I (PSI), cyclic electron flow around PSI, and state transitions. In Synechococcus elongatus, this protein is Cytochrome b6-f complex subunit 4.